Consider the following 101-residue polypeptide: Small ribosomal subunit protein uS14 (101 aa).

The protein belongs to the universal ribosomal protein uS14 family. Part of the 30S ribosomal subunit. Contacts proteins S3 and S10.

Its function is as follows. Binds 16S rRNA, required for the assembly of 30S particles and may also be responsible for determining the conformation of the 16S rRNA at the A site. This is Small ribosomal subunit protein uS14 from Chelativorans sp. (strain BNC1).